Consider the following 354-residue polypeptide: Uroporphyrinogen decarboxylase (354 aa).

Substrate contacts are provided by residues 30-34 (RQAGR), phenylalanine 49, aspartate 79, tyrosine 156, serine 211, and histidine 326.

This sequence belongs to the uroporphyrinogen decarboxylase family. In terms of assembly, homodimer.

It is found in the cytoplasm. The catalysed reaction is uroporphyrinogen III + 4 H(+) = coproporphyrinogen III + 4 CO2. It participates in porphyrin-containing compound metabolism; protoporphyrin-IX biosynthesis; coproporphyrinogen-III from 5-aminolevulinate: step 4/4. In terms of biological role, catalyzes the decarboxylation of four acetate groups of uroporphyrinogen-III to yield coproporphyrinogen-III. This Salinibacter ruber (strain DSM 13855 / M31) protein is Uroporphyrinogen decarboxylase.